Reading from the N-terminus, the 330-residue chain is PTS system mannose-specific EIIAB component (330 aa).

Positions 2-130 (GIGIIIASHG…NIIKESKDGI (129 aa)) constitute a PTS EIIA type-4 domain. His10 functions as the Tele-phosphohistidine intermediate; for EIIA activity in the catalytic mechanism. A Phosphohistidine; by HPr modification is found at His10. A hinge region spans residues 143-161 (TAATEKVVNALQGAIPAGT). A PTS EIIB type-4 domain is found at 166–330 (GKLKINLARV…FELIQKANIK (165 aa)). His181 functions as the Pros-phosphohistidine intermediate; for EIIB activity in the catalytic mechanism. A Phosphohistidine; by EIIA modification is found at His181.

As to quaternary structure, homodimer.

The protein resides in the cytoplasm. The protein localises to the cell membrane. It carries out the reaction D-mannose(out) + N(pros)-phospho-L-histidyl-[protein] = D-mannose 6-phosphate(in) + L-histidyl-[protein]. In terms of biological role, the phosphoenolpyruvate-dependent sugar phosphotransferase system (sugar PTS), a major carbohydrate active transport system, catalyzes the phosphorylation of incoming sugar substrates concomitantly with their translocation across the cell membrane. The enzyme II ManXYZ PTS system is involved in mannose transport. The chain is PTS system mannose-specific EIIAB component from Streptococcus pyogenes serotype M6 (strain ATCC BAA-946 / MGAS10394).